The primary structure comprises 95 residues: Citrate lyase acyl carrier protein (95 aa).

Ser-14 is subject to O-(phosphoribosyl dephospho-coenzyme A)serine.

It belongs to the CitD family. Oligomer with a subunit composition of (alpha,beta,gamma)6.

Its subcellular location is the cytoplasm. In terms of biological role, covalent carrier of the coenzyme of citrate lyase. The protein is Citrate lyase acyl carrier protein of Haemophilus ducreyi (strain 35000HP / ATCC 700724).